A 313-amino-acid polypeptide reads, in one-letter code: Methionyl-tRNA formyltransferase (313 aa).

Residue serine 113–proline 116 participates in (6S)-5,6,7,8-tetrahydrofolate binding.

The protein belongs to the Fmt family.

The catalysed reaction is L-methionyl-tRNA(fMet) + (6R)-10-formyltetrahydrofolate = N-formyl-L-methionyl-tRNA(fMet) + (6S)-5,6,7,8-tetrahydrofolate + H(+). Functionally, attaches a formyl group to the free amino group of methionyl-tRNA(fMet). The formyl group appears to play a dual role in the initiator identity of N-formylmethionyl-tRNA by promoting its recognition by IF2 and preventing the misappropriation of this tRNA by the elongation apparatus. The chain is Methionyl-tRNA formyltransferase from Francisella tularensis subsp. novicida (strain U112).